The chain runs to 358 residues: Extracellular phospholipase C (358 aa).

It localises to the secreted. This is Extracellular phospholipase C (plcA) from Dickeya chrysanthemi (Pectobacterium chrysanthemi).